Consider the following 2591-residue polypeptide: Eukaryotic translation initiation factor 2-alpha kinase PK4 (2591 aa).

Topologically, residues 1 to 16 (MYNKGINICLNEDNKC) are cytoplasmic. The helical transmembrane segment at 17–37 (IILLHIIFNKCIVSFVASHIL) threads the bilayer. At 38 to 1488 (VEGKICFLNR…EFSSQKHKKS (1451 aa)) the chain is on the lumenal side. Residues 1028–1048 (KKKRNSKKGENRNKKRKTQKR) are disordered. Residues 1489–1509 (WYWNIFYAITLVIVIPFIFIY) traverse the membrane as a helical segment. The Cytoplasmic segment spans residues 1510 to 2591 (RLFKKQTNNK…NIINGNEVDH (1082 aa)). Positions 1781 to 1840 (NLNSADEENKSPYAKKYSDEKKNRSKSSKYIENTQSNNNDNTNGNMNVGNHINNDKMNNK) are disordered. The span at 1813-1832 (NTQSNNNDNTNGNMNVGNHI) shows a compositional bias: low complexity. ATP is bound by residues 1880-1888 (IGQGGFGSV) and lysine 1905. Disordered stretches follow at residues 2123-2157 (DNDE…GGDI) and 2183-2212 (IKNT…TNNN). Residues 2134–2143 (KKNDNDERKS) show a composition bias toward basic and acidic residues. Residues 2181-2532 (MTIKNTQGTS…KIKVLLDPHL (352 aa)) form the Protein kinase domain. Aspartate 2369 (proton acceptor) is an active-site residue. A Phosphothreonine; by autocatalysis modification is found at threonine 2436. Residues 2558 to 2574 (STNPNGDIKENVNQNNL) show a composition bias toward polar residues. The interval 2558–2591 (STNPNGDIKENVNQNNLVDDKGNNNIINGNEVDH) is disordered. Positions 2580-2591 (NNNIINGNEVDH) are enriched in low complexity.

Belongs to the protein kinase superfamily. Ser/Thr protein kinase family. GCN2 subfamily. In terms of assembly, may form oligomers in response to stress; oligomerization may result in catalytic activity. Interacts with BIP; the interaction is disrupted in response to stress.

The protein localises to the endoplasmic reticulum membrane. It carries out the reaction L-seryl-[protein] + ATP = O-phospho-L-seryl-[protein] + ADP + H(+). It catalyses the reaction L-threonyl-[protein] + ATP = O-phospho-L-threonyl-[protein] + ADP + H(+). With respect to regulation, dissociation from BIP and oligomerization, may results autophosphorylation and kinase activity induction. During the asexual blood stage, phosphorylates translation factor eIF2alpha in late schizonts resulting in protein translation inhibition. Plays a role in trophozoite differentiation into schizonts. The protein is Eukaryotic translation initiation factor 2-alpha kinase PK4 of Plasmodium berghei (strain Anka).